The sequence spans 593 residues: Transcriptional repressor p66-beta (593 aa).

Ser-17 is modified (phosphoserine). Glycyl lysine isopeptide (Lys-Gly) (interchain with G-Cter in SUMO2) cross-links involve residues Lys-33, Lys-66, and Lys-97. The disordered stretch occupies residues 62-123 (ELPTKQDGSG…PERGRLTPSP (62 aa)). Composition is skewed to basic and acidic residues over residues 74-100 (GYEEKLNGNLRPHGDNRTAGRPGKENI) and 108-118 (SARRSEPERGR). Thr-120 carries the post-translational modification Phosphothreonine. 4 positions are modified to phosphoserine: Ser-122, Ser-129, Ser-134, and Ser-135. The stretch at 140 to 194 (SRMEERLKAANLEMFKGKGIEERQQLIKQLRDELRLEEARLVLLKKLRQSQLQKE) forms a coiled coil. Lys-147 participates in a covalent cross-link: Glycyl lysine isopeptide (Lys-Gly) (interchain with G-Cter in SUMO2). The tract at residues 165–195 (LIKQLRDELRLEEARLVLLKKLRQSQLQKEN) is CR1; interaction with MBD2 and MBD3. Residue Lys-199 forms a Glycyl lysine isopeptide (Lys-Gly) (interchain with G-Cter in SUMO2) linkage. Ser-208 carries the post-translational modification Phosphoserine. Residues 213-235 (SPAHVGQQGLSKLPSRPGAQGVE) form a disordered region. Lys-281 is covalently cross-linked (Glycyl lysine isopeptide (Lys-Gly) (interchain with G-Cter in SUMO2)). 3 positions are modified to phosphoserine: Ser-333, Ser-338, and Ser-340. The CR2; histone tail-binding stretch occupies residues 340–480 (SAMTDAANSQ…QEQEIEQRLQ (141 aa)). Glycyl lysine isopeptide (Lys-Gly) (interchain with G-Cter in SUMO2) cross-links involve residues Lys-353, Lys-454, and Lys-467. The segment at 414–467 (RVEPFVCAQCRTDFTPHWKQEKNGKILCEQCMTSNQKKALKAEHTNRLKNAFVK) adopts a GATA-type zinc-finger fold. The stretch at 449–482 (QKKALKAEHTNRLKNAFVKALQQEQEIEQRLQQQ) forms a coiled coil. Ser-486 is modified (phosphoserine). A Glycyl lysine isopeptide (Lys-Gly) (interchain with G-Cter in SUMO2) cross-link involves residue Lys-498.

In terms of assembly, homooligomer. Component of the nucleosome remodeling and deacetylase (NuRD) repressor complex, composed of core proteins MTA1, MTA2, MTA3, RBBP4, RBBP7, HDAC1, HDAC2, MBD2, MBD3, and peripherally associated proteins CDK2AP1, CDK2AP2, GATAD2A, GATAD2B, CHD3, CHD4 and CHD5. The exact stoichiometry of the NuRD complex is unknown, and some subunits such as MBD2 and MBD3, GATAD2A and GATAD2B, and CHD3, CHD4 and CHD5 define mutually exclusive NuRD complexes. Interacts with MBD2; this is required for the enhancement of MBD2-mediated repression and for targeting to the chromatin. Interacts with MBD3. Component of the MeCP1 histone deacetylase complex. Interacts with histone tails, including that of histones H2A, H2B, H3 and H4. Interacts with ERCC6. Widely expressed.

The protein resides in the nucleus speckle. It localises to the nucleus. Its subcellular location is the chromosome. Its function is as follows. Transcriptional repressor. Acts as a component of the histone deacetylase NuRD complex which participates in the remodeling of chromatin. Enhances MBD2-mediated repression. Efficient repression requires the presence of GATAD2A. Targets MBD3 to discrete loci in the nucleus. May play a role in synapse development. This Homo sapiens (Human) protein is Transcriptional repressor p66-beta (GATAD2B).